Reading from the N-terminus, the 251-residue chain is Aspartate/glutamate leucyltransferase (251 aa).

The protein belongs to the R-transferase family. Bpt subfamily.

It localises to the cytoplasm. It carries out the reaction N-terminal L-glutamyl-[protein] + L-leucyl-tRNA(Leu) = N-terminal L-leucyl-L-glutamyl-[protein] + tRNA(Leu) + H(+). It catalyses the reaction N-terminal L-aspartyl-[protein] + L-leucyl-tRNA(Leu) = N-terminal L-leucyl-L-aspartyl-[protein] + tRNA(Leu) + H(+). In terms of biological role, functions in the N-end rule pathway of protein degradation where it conjugates Leu from its aminoacyl-tRNA to the N-termini of proteins containing an N-terminal aspartate or glutamate. This is Aspartate/glutamate leucyltransferase from Xanthomonas oryzae pv. oryzae (strain KACC10331 / KXO85).